The chain runs to 2319 residues: Coagulation factor VIII (2319 aa).

The signal sequence occupies residues 1 to 19 (MQIALFACFFLSLFNFCSS). 2 Plastocyanin-like domains span residues 20 to 199 (AIRR…LLVC) and 207 to 349 (ERTQ…VDSC). The region spanning 20-349 (AIRRYYLGAV…MEAYVKVDSC (330 aa)) is the F5/8 type A 1 domain. N-linked (GlcNAc...) asparagine glycosylation occurs at N61. A disulfide bond links C173 and C199. N233 and N259 each carry an N-linked (GlcNAc...) asparagine glycan. Residue Y367 is modified to Sulfotyrosine. 2 Plastocyanin-like domains span residues 399–573 (KTWI…LLIC) and 583–730 (NQMM…VSSC). Residues 399–730 (KTWIHYISAE…MTALLKVSSC (332 aa)) enclose the F5/8 type A 2 domain. The N-linked (GlcNAc...) asparagine glycan is linked to N423. A disulfide bridge connects residues C547 and C573. N601 carries N-linked (GlcNAc...) asparagine glycosylation. A sulfotyrosine mark is found at Y737, Y738, and Y742. Residues 760–1640 (SFFQNTNHPN…IPPVLKRHQR (881 aa)) are b. N-linked (GlcNAc...) asparagine glycosylation is found at N880, N958, N1015, N1022, N1026, N1044, N1076, N1087, N1136, N1161, N1192, N1255, N1268, N1273, N1274, N1302, N1316, N1340, and N1378. The interval 1530-1549 (WNKAKRHGESIKGKTESSKN) is disordered. Basic and acidic residues predominate over residues 1536 to 1548 (HGESIKGKTESSK). Residues Y1669 and Y1687 each carry the sulfotyrosine modification. Plastocyanin-like domains follow at residues 1683-1845 (KTRH…LLIC) and 1855-2008 (GRQV…SKQC). Residues 1683–2008 (KTRHYFIAAV…TLFLVYSKQC (326 aa)) enclose the F5/8 type A 3 domain. N1797 carries N-linked (GlcNAc...) asparagine glycosylation. 3 disulfides stabilise this stretch: C1819–C1845, C2008–C2156, and C2161–C2313. F5/8 type C domains lie at 2008–2156 (CQIP…LMGC) and 2161–2313 (CSIP…ILGC). N2105 carries an N-linked (GlcNAc...) asparagine glycan.

This sequence belongs to the multicopper oxidase family. Interacts with vWF. vWF binding is essential for the stabilization of F8 in circulation. In terms of processing, the binding of vWF and activation depend on the sulfation of Tyr-1669. Post-translationally, proteolytically cleaved by cathepsin CTSG to produce a partially activated form. In terms of tissue distribution, found in most tissues.

It is found in the secreted. Its subcellular location is the extracellular space. Functionally, factor VIII, along with calcium and phospholipid, acts as a cofactor for factor IXa when it converts factor X to the activated form, factor Xa. The polypeptide is Coagulation factor VIII (F8) (Mus musculus (Mouse)).